We begin with the raw amino-acid sequence, 241 residues long: Eukaryotic translation initiation factor 6 (241 aa).

The protein belongs to the eIF-6 family. As to quaternary structure, monomer. Associates with the 60S ribosomal subunit.

It is found in the cytoplasm. It localises to the nucleus. The protein resides in the nucleolus. Its function is as follows. Binds to the 60S ribosomal subunit and prevents its association with the 40S ribosomal subunit to form the 80S initiation complex in the cytoplasm. Is also involved in ribosome biogenesis. Associates with pre-60S subunits in the nucleus and is involved in its nuclear export. This Encephalitozoon cuniculi (strain GB-M1) (Microsporidian parasite) protein is Eukaryotic translation initiation factor 6.